The chain runs to 292 residues: Ribosomal RNA small subunit methyltransferase A (292 aa).

Positions 29, 31, 56, 77, 102, and 127 each coordinate S-adenosyl-L-methionine.

Belongs to the class I-like SAM-binding methyltransferase superfamily. rRNA adenine N(6)-methyltransferase family. RsmA subfamily.

It is found in the cytoplasm. It catalyses the reaction adenosine(1518)/adenosine(1519) in 16S rRNA + 4 S-adenosyl-L-methionine = N(6)-dimethyladenosine(1518)/N(6)-dimethyladenosine(1519) in 16S rRNA + 4 S-adenosyl-L-homocysteine + 4 H(+). In terms of biological role, specifically dimethylates two adjacent adenosines (A1518 and A1519) in the loop of a conserved hairpin near the 3'-end of 16S rRNA in the 30S particle. May play a critical role in biogenesis of 30S subunits. The chain is Ribosomal RNA small subunit methyltransferase A from Bacillus subtilis (strain 168).